The chain runs to 345 residues: HTH-type transcriptional regulator reg1 (345 aa).

One can recognise an HTH lacI-type domain in the interval 1 to 58 (MTTRLADIAAQAGVSEATVSRVLNGKPGVAATTRQSVLAALDVLGYERPVRLRRRSAG). Residues 5 to 24 (LADIAAQAGVSEATVSRVLN) constitute a DNA-binding region (H-T-H motif).

Functionally, transcription repressor involved in control of expression of alpha-amylase and chitinase genes and of actinorhodin production. The protein is HTH-type transcriptional regulator reg1 (reg1) of Streptomyces lividans.